A 609-amino-acid polypeptide reads, in one-letter code: Proline--tRNA ligase (609 aa).

The protein belongs to the class-II aminoacyl-tRNA synthetase family. ProS type 1 subfamily. In terms of assembly, homodimer.

It localises to the cytoplasm. It carries out the reaction tRNA(Pro) + L-proline + ATP = L-prolyl-tRNA(Pro) + AMP + diphosphate. In terms of biological role, catalyzes the attachment of proline to tRNA(Pro) in a two-step reaction: proline is first activated by ATP to form Pro-AMP and then transferred to the acceptor end of tRNA(Pro). As ProRS can inadvertently accommodate and process non-cognate amino acids such as alanine and cysteine, to avoid such errors it has two additional distinct editing activities against alanine. One activity is designated as 'pretransfer' editing and involves the tRNA(Pro)-independent hydrolysis of activated Ala-AMP. The other activity is designated 'posttransfer' editing and involves deacylation of mischarged Ala-tRNA(Pro). The misacylated Cys-tRNA(Pro) is not edited by ProRS. The protein is Proline--tRNA ligase of Synechococcus sp. (strain JA-2-3B'a(2-13)) (Cyanobacteria bacterium Yellowstone B-Prime).